The following is a 234-amino-acid chain: Lipoprotein-releasing system ATP-binding protein LolD 1 (234 aa).

Residues 5–231 (IEARGIEKVF…RLTSNVRDPG (227 aa)) enclose the ABC transporter domain. Residue 41-48 (GASGSGKS) coordinates ATP.

The protein belongs to the ABC transporter superfamily. Lipoprotein translocase (TC 3.A.1.125) family. As to quaternary structure, the complex is composed of two ATP-binding proteins (LolD) and two transmembrane proteins (LolC and LolE).

It localises to the cell inner membrane. Its function is as follows. Part of the ABC transporter complex LolCDE involved in the translocation of mature outer membrane-directed lipoproteins, from the inner membrane to the periplasmic chaperone, LolA. Responsible for the formation of the LolA-lipoprotein complex in an ATP-dependent manner. In Caulobacter vibrioides (strain ATCC 19089 / CIP 103742 / CB 15) (Caulobacter crescentus), this protein is Lipoprotein-releasing system ATP-binding protein LolD 1.